The sequence spans 237 residues: GATA zinc finger domain-containing protein 18 (237 aa).

Low complexity-rich tracts occupy residues 1–28 and 87–118; these read MAHN…KNNN and NTST…PNSN. Disordered stretches follow at residues 1 to 31, 78 to 119, and 140 to 186; these read MAHN…NSEY, PTNT…NSNL, and FEEG…GGCS. Residues 140–151 are compositionally biased toward acidic residues; sequence FEEGDDEEETSS. The segment covering 152–167 has biased composition (low complexity); sequence DSDSSSSSSTSSSSSE. The segment at 185-212 adopts a GATA-type zinc-finger fold; sequence CSICKTQETPYWRKGKDGDKTVYLCNAC.

The chain is GATA zinc finger domain-containing protein 18 (gtaR) from Dictyostelium discoideum (Social amoeba).